Consider the following 131-residue polypeptide: MSWQQYVDDHLMCDIDGNRLTAAAILGQDGSVWSQSATFPAFKPEEIAAILKDFDQPGTLAPTGLFLGGTKYMVIQGEAGAVIRGKKGSGGITVKKTNQALIIGIYDEPLTPGQCNMIVERLGDYLIEQGL.

It belongs to the profilin family. As to quaternary structure, occurs in many kinds of cells as a complex with monomeric actin in a 1:1 ratio.

The protein resides in the cytoplasm. It localises to the cytoskeleton. Binds to actin and affects the structure of the cytoskeleton. At high concentrations, profilin prevents the polymerization of actin, whereas it enhances it at low concentrations. By binding to PIP2, it inhibits the formation of IP3 and DG. The chain is Profilin from Prunus dulcis (Almond).